Here is a 362-residue protein sequence, read N- to C-terminus: MRPLRHAVGSSTVTLETDLTLFPEDLHAPLLGSAGNATVDELALAARFDGLHQLLYTRGGVRPTNAAIEEVGKLLLLRLWLSRDDEASVDGVGLRALFDGAVPDESVVEVTKKAFTQVLTVDRMSLRAVDGSSRPLWPYDEPFRLAEPTVLQSALALVNEILGGGTRVADPLGTAFDAFLSGRYDHSGGLGTYLTPSSVARMMAEVVLDLLSSDALADVRAPIIADPFCGTGRFLVAAFDAAEERHENVDLAGLLDGGLVGADQSTTAIAKSGLNLLLYGAQQPEVYAVADSMTDPGLDRLRGTLAAVLTNPPFGGGKYDDALGIDRTRELFPSVRPNRPMDPRLLDSRCLSNFCDPGESLG.

This sequence belongs to the N(4)/N(6)-methyltransferase family.

It carries out the reaction a 2'-deoxyadenosine in DNA + S-adenosyl-L-methionine = an N(6)-methyl-2'-deoxyadenosine in DNA + S-adenosyl-L-homocysteine + H(+). A gamma subtype methylase that recognizes the double-stranded sequence 5'-GATNNNNATC-3', methylates A-? on both strands, and protects the DNA from cleavage by the MamI endonuclease. The polypeptide is Type II methyltransferase M.MamI (Microbacterium ammoniaphilum).